The primary structure comprises 498 residues: Cytotardin (498 aa).

Residues 18 to 58 (DRVHSKDELQALNTRLAKYIDKIRNLENENVALQRQLQTAE) are coil 1A. The IF rod domain maps to 22 to 378 (SKDELQALNT…KLLSGEEQRL (357 aa)). Residues 59-69 (QTTVTEIHRVS) are linker 1. Positions 70–213 (KNYDEELAKL…ENLREEKSQR (144 aa)) are coil 1B. A linker 2 region spans residues 214–231 (QYLLHDLQRGLQDEFESK). The coil 2 stretch occupies residues 232 to 371 (LVQQLNELRA…AELATYNKLL (140 aa)). The segment at 381–425 (DGSGTVIRRPTGGATGTGSGIYGGTGSGGYSRDIGSTTTTKTTYT) is disordered. Gly residues predominate over residues 393–409 (GATGTGSGIYGGTGSGG).

Belongs to the intermediate filament family.

Its subcellular location is the cytoplasm. The protein resides in the cell cortex. Its function is as follows. Intermediate filament (IF) protein that forms both short filaments and extensive cytoskeletal networks which most likely are homomeric. Some of the cytotardin arrays display cage-like perinuclear structures, while others are located in the periphery close to the cell membrane. The entire tardigrade body is ensheathed by a grid of belt-like filaments formed by the cytotardin protein, which retain their integrity even in contracted specimens. The belt-like structures encircling each epidermal cell might help to resist the shearing forces that arise during freezing and thawing cycles, whereas the dense meshwork at the basis of each claw and around the stylets might provide the tissue stability necessary for locomotion and feeding. This chain is Cytotardin, found in Hypsibius exemplaris (Freshwater tardigrade).